We begin with the raw amino-acid sequence, 164 residues long: Phosphopantetheine adenylyltransferase (164 aa).

Ser-11 provides a ligand contact to substrate. ATP contacts are provided by residues 11 to 12 (SF) and His-19. 3 residues coordinate substrate: Lys-43, Ala-76, and Arg-90. ATP is bound by residues 91–93 (GLR), Glu-101, and 126–132 (YQHISSS).

This sequence belongs to the bacterial CoaD family. In terms of assembly, homohexamer. Mg(2+) serves as cofactor.

Its subcellular location is the cytoplasm. The catalysed reaction is (R)-4'-phosphopantetheine + ATP + H(+) = 3'-dephospho-CoA + diphosphate. It functions in the pathway cofactor biosynthesis; coenzyme A biosynthesis; CoA from (R)-pantothenate: step 4/5. Functionally, reversibly transfers an adenylyl group from ATP to 4'-phosphopantetheine, yielding dephospho-CoA (dPCoA) and pyrophosphate. The polypeptide is Phosphopantetheine adenylyltransferase (Streptococcus sanguinis (strain SK36)).